The following is a 164-amino-acid chain: FMN reductase (NADH) RutF (164 aa).

The protein belongs to the non-flavoprotein flavin reductase family. RutF subfamily.

It catalyses the reaction FMNH2 + NAD(+) = FMN + NADH + 2 H(+). Functionally, catalyzes the reduction of FMN to FMNH2 which is used to reduce pyrimidine by RutA via the Rut pathway. The sequence is that of FMN reductase (NADH) RutF from Escherichia coli O81 (strain ED1a).